The primary structure comprises 30 residues: Cytochrome c3, 50 kDa (30 aa).

In terms of assembly, monomer. Binds 4 heme groups per subunit.

It localises to the periplasm. Functionally, participates in sulfate respiration coupled with phosphorylation by transferring electrons from the enzyme dehydrogenase to ferredoxin. The chain is Cytochrome c3, 50 kDa from Desulfuromonas acetoxidans (Chloropseudomonas ethylica).